Consider the following 645-residue polypeptide: Glucans biosynthesis glucosyltransferase H (645 aa).

A compositionally biased stretch (polar residues) spans 1 to 13; it reads MDGTVTPSPTTTA. Positions 1 to 32 are disordered; the sequence is MDGTVTPSPTTTAMPPVSALDAGTPTLPPEAP. Transmembrane regions (helical) follow at residues 64-84, 98-118, 423-443, 465-485, 504-524, 559-579, and 580-600; these read LIGG…SVLW, LFVL…AGFV, APMW…GGGI, AIWI…LGYI, AVSI…VMYL, YGGL…VSPA, and LAAW…VVAL.

Belongs to the glycosyltransferase 2 family. OpgH subfamily.

Its subcellular location is the cell inner membrane. The protein operates within glycan metabolism; osmoregulated periplasmic glucan (OPG) biosynthesis. Functionally, involved in the biosynthesis of osmoregulated periplasmic glucans (OPGs). The chain is Glucans biosynthesis glucosyltransferase H from Xanthomonas euvesicatoria pv. vesicatoria (strain 85-10) (Xanthomonas campestris pv. vesicatoria).